A 297-amino-acid chain; its full sequence is Tyrosine recombinase XerD (297 aa).

The Core-binding (CB) domain maps to 1–86 (MNDLIDDFLH…SLRSFFHYLM (86 aa)). Positions 107-291 (SLPKVLNLDD…TKLRLKDVYK (185 aa)) constitute a Tyr recombinase domain. Residues R147, K171, H243, R246, and H269 contribute to the active site. The active-site O-(3'-phospho-DNA)-tyrosine intermediate is the Y278.

The protein belongs to the 'phage' integrase family. XerD subfamily. In terms of assembly, forms a cyclic heterotetrameric complex composed of two molecules of XerC and two molecules of XerD.

The protein localises to the cytoplasm. Site-specific tyrosine recombinase, which acts by catalyzing the cutting and rejoining of the recombining DNA molecules. The XerC-XerD complex is essential to convert dimers of the bacterial chromosome into monomers to permit their segregation at cell division. It also contributes to the segregational stability of plasmids. In Listeria innocua serovar 6a (strain ATCC BAA-680 / CLIP 11262), this protein is Tyrosine recombinase XerD.